The primary structure comprises 274 residues: Penicillin-insensitive murein endopeptidase (274 aa).

Residues 1 to 19 form the signal peptide; that stretch reads MNKTAIALLALLASSVSLA. Intrachain disulfides connect C44–C265, C187–C235, and C216–C223. 6 residues coordinate Zn(2+): H110, H113, D120, D147, H150, and H211. The tract at residues 227–274 is disordered; sequence PLPPPGDGCGAELQSWFEPPKPGTTKPEKKTPPPLPPSCQALLDEHVI.

This sequence belongs to the peptidase M74 family. In terms of assembly, dimer. Zn(2+) is required as a cofactor.

It is found in the periplasm. Murein endopeptidase that cleaves the D-alanyl-meso-2,6-diamino-pimelyl amide bond that connects peptidoglycan strands. Likely plays a role in the removal of murein from the sacculus. The polypeptide is Penicillin-insensitive murein endopeptidase (Escherichia coli O157:H7).